Here is a 126-residue protein sequence, read N- to C-terminus: Histone H2B type 1-B (126 aa).

The span at 1 to 12 shows a compositional bias: low complexity; the sequence is MPEPSKSAPAPK. Residues 1-36 are disordered; sequence MPEPSKSAPAPKKGSKKAISKAQKKDGKKRKRSRKE. The residue at position 2 (Pro2) is an N-acetylproline. Glu3 carries the ADP-ribosyl glutamic acid modification. Lys6 is subject to N6-(2-hydroxyisobutyryl)lysine; alternate. Position 6 is an N6-(beta-hydroxybutyryl)lysine; alternate (Lys6). N6-acetyllysine; alternate is present on Lys6. Position 6 is an N6-butyryllysine; alternate (Lys6). An N6-crotonyllysine; alternate modification is found at Lys6. Residue Lys6 is modified to N6-lactoyllysine; alternate. A Glycyl lysine isopeptide (Lys-Gly) (interchain with G-Cter in SUMO2); alternate cross-link involves residue Lys6. Residue Ser7 is modified to ADP-ribosylserine. N6-(beta-hydroxybutyryl)lysine; alternate is present on Lys12. An N6-acetyllysine; alternate mark is found at Lys12 and Lys13. Lys12 and Lys13 each carry N6-crotonyllysine; alternate. Lys12 is modified (N6-lactoyllysine; alternate). N6-(2-hydroxyisobutyryl)lysine; alternate is present on Lys13. Ser15 bears the Phosphoserine; by STK4/MST1 mark. N6-acetyllysine; alternate occurs at positions 16, 17, 21, and 24. 4 positions are modified to N6-crotonyllysine; alternate: Lys16, Lys17, Lys21, and Lys24. N6-lactoyllysine; alternate occurs at positions 16, 17, 21, and 24. Position 17 is an N6-glutaryllysine; alternate (Lys17). Residues Lys21 and Lys24 each carry the N6-(2-hydroxyisobutyryl)lysine; alternate modification. At Lys21 the chain carries N6-(beta-hydroxybutyryl)lysine; alternate. Lys21 is subject to N6-butyryllysine; alternate. Lys21 participates in a covalent cross-link: Glycyl lysine isopeptide (Lys-Gly) (interchain with G-Cter in SUMO2); alternate. Lys25 is subject to N6-(2-hydroxyisobutyryl)lysine. N6-(2-hydroxyisobutyryl)lysine; alternate is present on Lys35. The residue at position 35 (Lys35) is an N6-(beta-hydroxybutyryl)lysine; alternate. Position 35 is an N6-crotonyllysine; alternate (Lys35). Position 35 is an N6-glutaryllysine; alternate (Lys35). The residue at position 35 (Lys35) is an N6-succinyllysine; alternate. A Glycyl lysine isopeptide (Lys-Gly) (interchain with G-Cter in ubiquitin); alternate cross-link involves residue Lys35. Glu36 is modified (polyADP-ribosyl glutamic acid). Ser37 carries the post-translational modification Phosphoserine; by AMPK. Residues Lys44, Lys47, and Lys58 each carry the N6-(2-hydroxyisobutyryl)lysine; alternate modification. N6-lactoyllysine; alternate is present on Lys44. Residues Lys44 and Lys47 each carry the N6-glutaryllysine; alternate modification. The residue at position 47 (Lys47) is an N6-methyllysine; alternate. Residue Lys58 is modified to N6,N6-dimethyllysine; alternate. Arg80 is modified (dimethylated arginine). N6-(2-hydroxyisobutyryl)lysine; alternate is present on Lys86. N6-acetyllysine; alternate is present on Lys86. Lys86 bears the N6-lactoyllysine; alternate mark. N6,N6,N6-trimethyllysine; alternate is present on Lys86. An omega-N-methylarginine mark is found at Arg87 and Arg93. Residue Lys109 is modified to N6-(2-hydroxyisobutyryl)lysine; alternate. N6-(beta-hydroxybutyryl)lysine; alternate is present on Lys109. Lys109 is subject to N6-lactoyllysine; alternate. Lys109 is modified (N6-glutaryllysine; alternate). Lys109 carries the post-translational modification N6-methyllysine; alternate. A glycan (O-linked (GlcNAc) serine) is linked at Ser113. A Phosphothreonine modification is found at Thr116. An N6-(2-hydroxyisobutyryl)lysine; alternate mark is found at Lys117 and Lys121. Lys117 carries the N6-(beta-hydroxybutyryl)lysine; alternate modification. An N6-lactoyllysine; alternate mark is found at Lys117 and Lys121. 2 positions are modified to N6-glutaryllysine; alternate: Lys117 and Lys121. N6-succinyllysine; alternate occurs at positions 117 and 121. Lys117 is subject to N6-methylated lysine; alternate. Residue Lys121 forms a Glycyl lysine isopeptide (Lys-Gly) (interchain with G-Cter in ubiquitin); alternate linkage.

This sequence belongs to the histone H2B family. In terms of assembly, the nucleosome is a histone octamer containing two molecules each of H2A, H2B, H3 and H4 assembled in one H3-H4 heterotetramer and two H2A-H2B heterodimers. The octamer wraps approximately 147 bp of DNA. Monoubiquitination at Lys-35 (H2BK34Ub) by the MSL1/MSL2 dimer is required for histone H3 'Lys-4' (H3K4me) and 'Lys-79' (H3K79me) methylation and transcription activation at specific gene loci, such as HOXA9 and MEIS1 loci. Similarly, monoubiquitination at Lys-121 (H2BK120Ub) by the RNF20/40 complex gives a specific tag for epigenetic transcriptional activation and is also prerequisite for histone H3 'Lys-4' and 'Lys-79' methylation. It also functions cooperatively with the FACT dimer to stimulate elongation by RNA polymerase II. H2BK120Ub also acts as a regulator of mRNA splicing: deubiquitination by USP49 is required for efficient cotranscriptional splicing of a large set of exons. In terms of processing, phosphorylated on Ser-15 (H2BS14ph) by STK4/MST1 during apoptosis; which facilitates apoptotic chromatin condensation. Also phosphorylated on Ser-15 in response to DNA double strand breaks (DSBs), and in correlation with somatic hypermutation and immunoglobulin class-switch recombination. Phosphorylation at Ser-37 (H2BS36ph) by AMPK in response to stress promotes transcription. Post-translationally, glcNAcylation at Ser-113 promotes monoubiquitination of Lys-121. It fluctuates in response to extracellular glucose, and associates with transcribed genes. ADP-ribosylated by PARP1 or PARP2 on Ser-7 (H2BS6ADPr) in response to DNA damage. H2BS6ADPr promotes recruitment of CHD1L. Mono-ADP-ribosylated on Glu-3 (H2BE2ADPr) by PARP3 in response to single-strand breaks. Poly ADP-ribosylation on Glu-36 (H2BE35ADPr) by PARP1 regulates adipogenesis: it inhibits phosphorylation at Ser-37 (H2BS36ph), thereby blocking expression of pro-adipogenetic genes. In terms of processing, hydroxybutyrylation of histones is induced by starvation. Post-translationally, crotonylation (Kcr) is specifically present in male germ cells and marks testis-specific genes in post-meiotic cells, including X-linked genes that escape sex chromosome inactivation in haploid cells. Crotonylation marks active promoters and enhancers and confers resistance to transcriptional repressors. It is also associated with post-meiotically activated genes on autosomes. Lactylated in macrophages by EP300/P300 by using lactoyl-CoA directly derived from endogenous or exogenous lactate, leading to stimulates gene transcription.

It localises to the nucleus. It is found in the chromosome. In terms of biological role, core component of nucleosome. Nucleosomes wrap and compact DNA into chromatin, limiting DNA accessibility to the cellular machineries which require DNA as a template. Histones thereby play a central role in transcription regulation, DNA repair, DNA replication and chromosomal stability. DNA accessibility is regulated via a complex set of post-translational modifications of histones, also called histone code, and nucleosome remodeling. The polypeptide is Histone H2B type 1-B (Mus musculus (Mouse)).